The primary structure comprises 263 residues: Achaete-scute homolog 2 (263 aa).

Disordered stretches follow at residues Arg104–Arg126 and Pro194–Pro248. 3 stretches are compositionally biased toward low complexity: residues Ala110–Ala121, Pro202–Pro220, and Ser230–Ser247. Residues Ala118 to Leu170 form the bHLH domain.

Efficient DNA binding requires dimerization with another basic helix-loop-helix (bHLH) protein. Forms heterodimers with bHLH transcription factor TCF3. May not heterodimerise with bHLH protein HAND1. In terms of tissue distribution, expressed in follicular T-helper (Tfh) cells.

The protein resides in the nucleus. Functionally, transcription factor. Binds to E-box motifs 5'-CANNTG-3' in the regulatory elements of target genes, probably as a heterodimer with another basic helix-loop-helix (bHLH) protein such as the transcription factor TCF3. May bind both open and closed chromatin, acting as a pioneer transcription factor to allow other factors to bind and activate lineage-specific genes. Required during post-implantation development for the generation of some differentiated trophoblast cell types. Transcriptional activity of ASCL2 may be antagonised in a subset of trophoblast cells by bHLH transcription factor HAND1, perhaps by competing for dimerization with other bHLH proteins. Involved in differentiation and function of follicular T-helper (Tfh) cells, thereby playing a role in germinal center responses; probably modulates expression of genes involved in Tfh cell function, such as BCL6. May also act as a suppressor of Th1-, Th2- and Th17-cell differentiation. Induces the formation of stem cells in intestinal crypts in vitro, synergistically activating transcription of target genes, such as SOX9, together with TCF4/beta-catenin. May form a bistable transcriptional switch, controlling expression of its own gene together with Wnt/R-spondin signaling, and thereby maintaining stem cell characteristics. Modulates expression of target genes, including perhaps down-regulating EGR1/Krox24 and chemokine CXCL10/Mob-1 and up-regulating CXCR4 and CDKN1C/p57kip2, in Schwann cells. May play a role in reducing proliferation of Schwann cells, perhaps acting via modulation of expression of CDKN1C. May be dispensable for blastocyst formation and later embryonic function. May be involved in the determination of neuronal precursors. The protein is Achaete-scute homolog 2 (Ascl2) of Mus musculus (Mouse).